Here is a 222-residue protein sequence, read N- to C-terminus: N-(5'-phosphoribosyl)anthranilate isomerase (222 aa).

Belongs to the TrpF family.

It carries out the reaction N-(5-phospho-beta-D-ribosyl)anthranilate = 1-(2-carboxyphenylamino)-1-deoxy-D-ribulose 5-phosphate. It participates in amino-acid biosynthesis; L-tryptophan biosynthesis; L-tryptophan from chorismate: step 3/5. The sequence is that of N-(5'-phosphoribosyl)anthranilate isomerase from Rhizobium johnstonii (strain DSM 114642 / LMG 32736 / 3841) (Rhizobium leguminosarum bv. viciae).